We begin with the raw amino-acid sequence, 430 residues long: Toxin coregulated pilus biosynthesis protein B (430 aa).

A compositionally biased stretch (polar residues) spans 351–366 (NFSSESAKDSQGTTQK). A disordered region spans residues 351 to 371 (NFSSESAKDSQGTTQKDGSKG).

Involved in TCP pilus biogenesis. In Vibrio cholerae serotype O1 (strain ATCC 39315 / El Tor Inaba N16961), this protein is Toxin coregulated pilus biosynthesis protein B (tcpB).